The sequence spans 211 residues: BAG family molecular chaperone regulator 2 (211 aa).

Alanine 2 is modified (N-acetylalanine). A phosphoserine mark is found at serine 20, serine 31, and serine 73. Positions 20 to 61 (SMADRSSRLLESLDQLELRVEALREAATAVEQEKEVLLEMIH) form a coiled coil. The BAG domain occupies 109–189 (SLKHATRIID…NIENADKAIK (81 aa)).

Binds to the ATPase domain of HSP/HSC70 chaperones. May interact with NWD1. Interacts with HSPA1A (via NBD), HSPA1B (via NBD) and HSPA8. May interact with DNJC9; the interaction seems to be histone-dependent.

Its function is as follows. Co-chaperone for HSP70 and HSC70 chaperone proteins. Acts as a nucleotide-exchange factor (NEF) promoting the release of ADP from the HSP70 and HSC70 proteins thereby triggering client/substrate protein release. In Bos taurus (Bovine), this protein is BAG family molecular chaperone regulator 2.